A 469-amino-acid polypeptide reads, in one-letter code: Adenosylhomocysteinase (469 aa).

Residues Thr-58, Asp-133, and Glu-195 each coordinate substrate. 196 to 198 (TTT) is a binding site for NAD(+). Residues Lys-225 and Asp-229 each contribute to the substrate site. NAD(+) is bound by residues Asn-230, 259 to 264 (GFGDVG), Glu-282, Asn-317, 338 to 340 (IGH), and Asn-383.

It belongs to the adenosylhomocysteinase family. NAD(+) serves as cofactor.

The protein resides in the cytoplasm. It carries out the reaction S-adenosyl-L-homocysteine + H2O = L-homocysteine + adenosine. It functions in the pathway amino-acid biosynthesis; L-homocysteine biosynthesis; L-homocysteine from S-adenosyl-L-homocysteine: step 1/1. May play a key role in the regulation of the intracellular concentration of adenosylhomocysteine. This is Adenosylhomocysteinase from Rhodopseudomonas palustris (strain TIE-1).